The chain runs to 229 residues: MDSKVSSQKGSRLLLLLVVSNLLLCQGVVSTPVCPNGAGNCQVSLRDLFDRAVMVSHYIHNLSSEMFNEFDKRYAQGKGFITMALNSCHTSSLPTPEDKEQAQQTHHEVLMSLILGLLRSWNDPLYHLVTEVRGMKGAPDGILSRAIEIEEENKRLLEGMEMIFGQVLPGAKETEPYPVWSGLPSLQTKDEDARYSAFYNLLHCLRRDSSKIDTYLKLLNCRIIYNNNC.

The signal sequence occupies residues 1 to 30 (MDSKVSSQKGSRLLLLLVVSNLLLCQGVVS). Cys-34 and Cys-41 form a disulfide bridge. A phosphoserine mark is found at Ser-56, Ser-64, and Ser-120. 2 disulfides stabilise this stretch: Cys-88–Cys-204 and Cys-221–Cys-229.

It belongs to the somatotropin/prolactin family. As to quaternary structure, interacts with PRLR.

The protein localises to the secreted. Prolactin acts primarily on the mammary gland by promoting lactation. This Cervus elaphus (Red deer) protein is Prolactin (PRL).